Reading from the N-terminus, the 686-residue chain is Protein MxiA (686 aa).

6 consecutive transmembrane segments (helical) span residues 28–52 (LIIPLPTYLVDFLIGLNIVLAILVF), 105–129 (FVIGDSLAVGFVIFSIVTVVQFIVI), 197–216 (AIAGIIIIFVNLIGGISVGM), 232–256 (ILTIGDGLVSQIPALLISISAGFIV), 274–292 (IFGNPFVLIVTSALALAIG), and 299–315 (FFVFFLIAVTLTALFYY).

This sequence belongs to the FHIPEP (flagella/HR/invasion proteins export pore) family.

The protein localises to the cell inner membrane. Functionally, necessary for the secretion of IPA invasins. The chain is Protein MxiA (mxiA) from Shigella flexneri.